The following is a 300-amino-acid chain: Peroxisomal 2,4-dienoyl-CoA reductase [(3E)-enoyl-CoA-producing] (300 aa).

NADP(+)-binding positions include 42-47 (GGGSGI), 67-71 (RNLEK), and Asp93. A substrate-binding site is contributed by Arg67. Substrate is bound by residues Arg95, Phe125, and 133–135 (SFN). NADP(+) is bound by residues Lys189 and 215-221 (PGPISGT). Arg226 contacts substrate. Positions 298-300 (AKL) match the Microbody targeting signal motif.

Belongs to the short-chain dehydrogenases/reductases (SDR) family. 2,4-dienoyl-CoA reductase subfamily. In terms of assembly, monomer, dimer and oligomer.

The protein localises to the peroxisome. The catalysed reaction is a (2E,4Z)-dienoyl-CoA + NADPH + H(+) = a 4,5-saturated-(3E)-enoyl-CoA + NADP(+). It catalyses the reaction a (2E,4E)-dienoyl-CoA + NADPH + H(+) = a 4,5-saturated-(3E)-enoyl-CoA + NADP(+). It carries out the reaction (2E,4E)-hexadienoyl-CoA + NADPH + H(+) = (3E)-hexenoyl-CoA + NADP(+). The enzyme catalyses (2E,4E)-decadienoyl-CoA + NADPH + H(+) = (3E)-decenoyl-CoA + NADP(+). The catalysed reaction is (2E,4Z,7Z,10Z,13Z,16Z,19Z)-docosaheptaenoyl-CoA + NADPH + H(+) = (3E,7Z,10Z,13Z,16Z,19Z)-docosahexaenoyl-CoA + NADP(+). Functionally, auxiliary enzyme of beta-oxidation. Participates in the degradation of unsaturated fatty enoyl-CoA esters having double bonds in both even- and odd-numbered positions in peroxisome. Catalyzes the NADP-dependent reduction of 2,4-dienoyl-CoA to yield trans-3-enoyl-CoA. The chain is Peroxisomal 2,4-dienoyl-CoA reductase [(3E)-enoyl-CoA-producing] (decr2) from Danio rerio (Zebrafish).